The primary structure comprises 123 residues: MRFWSLFLLVVLLAVGGQLPAASGRKKGERAGACPPEDGPCVISVPDQCQEDSQCPSTMKCCFQACFRHCVPRILVKRGGCPEDQLQCLSPTEHLCNKDSDCSGKKRCCHTSCGRECRDPARG.

Residues 1-24 (MRFWSLFLLVVLLAVGGQLPAASG) form the signal peptide. 2 consecutive WAP domains span residues 27-74 (KGER…VPRI) and 75-121 (LVKR…RDPA). 8 disulfides stabilise this stretch: cysteine 34-cysteine 62, cysteine 41-cysteine 66, cysteine 49-cysteine 61, cysteine 55-cysteine 70, cysteine 81-cysteine 109, cysteine 88-cysteine 113, cysteine 96-cysteine 108, and cysteine 102-cysteine 117.

It is found in the secreted. Functionally, putative acid-stable proteinase inhibitor. In Lemur catta (Ring-tailed lemur), this protein is WAP four-disulfide core domain protein 5 (WFDC5).